Consider the following 538-residue polypeptide: MATGRLGVGETLQALNAAVGPGSPVWFKETHARHLRVRDFLAPRSALQARFRDGQVPECVFRAVSCLQGPGVAPVLRCAPTPAGLSLQLQRPAVFEHVLGALASYATPAKPASPGPRVILHCPALRCNPDTLRLSQLRAVLVADHLVRVLRAHGVRVCTVPPVRDPHMSTFLQKLRVEWPSASKNTSTETLRTCVLAKFNVSKEETLPPGVLGRLCLKELVEQRHAAGYDPSIDHCLVTEDLLSVLSELQEAARHWPEDGHPAPVGGPDAGVDDCVVIHVVSCEEAFQQQKLDLLWQKVDDQVPHRQKHLVCGPVKVAGVPGTQMTAPEYHRLRHAQVCKASAQKHGGDLAQDPAWTETFDILSVATIKFEMLSTAPQGQLLLAHSTISTKGTKSGTFVMYNCARLATLFEGYKHGMEQGLYPTFPLVSSLDFSLLHDEGEWLLLFNSVLPFLDLLSQTVSLASTPGLHIPVRTEMVCKFLVQLSMDFSSYYNRVHILGEPRPHLFGQMFARLQLLRAVREVFHTGLAMLGLPPLSHI.

As to quaternary structure, part of a complex containing tRNA(Arg) and METTL2. Interacts with tRNA(Arg)(CCU) and tRNA(Arg)(UCU). Interacts with METTL2.

Involved in tRNA methylation. Facilitates the recognition and targeting of tRNA(Arg)(CCU) and tRNA(Arg)(UCU) substrates for N(3)-methylcytidine modification by METTL2. The protein is DALR anticodon-binding domain-containing protein 3 (Dalrd3) of Rattus norvegicus (Rat).